Here is a 1615-residue protein sequence, read N- to C-terminus: Low-density lipoprotein receptor-related protein 5 (1615 aa).

A signal peptide spans 1 to 31 (MEAAPPGPPWPLLLLLLLLLALCGCPAPAAA). The segment at 32-288 (SPLLLFANRR…YSPMDIQVLS (257 aa)) is beta-propeller 1. Over 32-1384 (SPLLLFANRR…PPSDDSPAHS (1353 aa)) the chain is Extracellular. LDL-receptor class B repeat units follow at residues 75–119 (GAVY…DWVG), 120–162 (KKLY…DPAH), 163–206 (GYMY…DLEE), 207–247 (QKLY…TLSG), and 248–290 (DTLY…LSQE). Residues 78–81 (YWTD) form a YWTD 1 repeat. N-linked (GlcNAc...) asparagine glycosylation occurs at Asn93. Residues 123 to 126 (YWTD) form a YWTD 2 repeat. A glycan (N-linked (GlcNAc...) asparagine) is linked at Asn138. Residues 166-169 (YWTD) form a YWTD 3 repeat. A YWTD 4 repeat occupies 251–254 (YWTD). The region spanning 295-337 (FHTRCEEDNGGCSHLCLLSPSEPFYTCACPTGVQLQDNGRTCK) is the EGF-like 1 domain. Intrachain disulfides connect Cys299-Cys310, Cys306-Cys321, and Cys323-Cys336. The beta-propeller 2 stretch occupies residues 341-602 (EEVLLLARRT…AVNVAKVVGT (262 aa)). LDL-receptor class B repeat units follow at residues 385 to 427 (GYVY…DWVA), 428 to 470 (RNLY…HPVM), 471 to 514 (GLMY…DLQE), 515 to 557 (GKLY…LGDF), and 558 to 600 (IYWT…AKVV). YWTD repeat units lie at residues 388 to 391 (YWTD) and 431 to 434 (YWTD). Asn446 carries N-linked (GlcNAc...) asparagine glycosylation. One copy of the YWTD 7 repeat lies at 474–477 (YWTD). The N-linked (GlcNAc...) asparagine glycan is linked to Asn499. One copy of the YWTD 8 repeat lies at 559–562 (YWTD). In terms of domain architecture, EGF-like 2 spans 601–641 (GTNPCADRNGGCSHLCFFTPHATRCGCPIGLELLSDMKTCI). 3 disulfide bridges follow: Cys605/Cys616, Cys612/Cys625, and Cys627/Cys640. The segment at 644-903 (EAFLVFTSRA…VFHSSRQDGL (260 aa)) is beta-propeller 3. LDL-receptor class B repeat units lie at residues 687–729 (NHIY…DWMG), 730–772 (KNLY…DPTK), 773–815 (GYIY…DYAD), 816–855 (QRLYWTDLDTNMIESSNMLGQERVVIADDLPHPFGLTQYS), and 856–898 (DYIY…FHSS). One copy of the YWTD 9 repeat lies at 690-693 (YWTD). Asn705 is a glycosylation site (N-linked (GlcNAc...) asparagine). YWTD repeat units follow at residues 819–822 (YWTD) and 859–862 (YWTD). N-linked (GlcNAc...) asparagine glycosylation occurs at Asn878. The region spanning 902-942 (GLNDCMHNNGQCGQLCLAIPGGHRCGCASHYTLDPSSRNCS) is the EGF-like 3 domain. 3 disulfides stabilise this stretch: Cys906–Cys917, Cys913–Cys926, and Cys928–Cys941. Positions 945–1212 (TTFLLFSQKS…AVEEVSLEEF (268 aa)) are beta-propeller 4. LDL-receptor class B repeat units lie at residues 989-1035 (KFIY…DIYS), 1036-1078 (RTLF…NAER), 1079-1123 (GYLY…DNTL), 1124-1164 (GKLF…TILG), and 1165-1207 (KHLY…VEEV). Positions 1213–1254 (SAHPCARDNGGCSHICIAKGDGTPRCSCPVHLVLLQNLLTCG) constitute an EGF-like 4 domain. 12 disulfides stabilise this stretch: Cys1217–Cys1228, Cys1224–Cys1238, Cys1240–Cys1253, Cys1259–Cys1273, Cys1266–Cys1286, Cys1280–Cys1295, Cys1298–Cys1310, Cys1305–Cys1323, Cys1317–Cys1332, Cys1336–Cys1348, Cys1343–Cys1361, and Cys1355–Cys1370. 3 LDL-receptor class A domains span residues 1258–1296 (TCSPDQFACATGEIDCIPGAWRCDGFPECDDQSDEEGCP), 1297–1333 (VCSAAQFPCARGQCVDLRLRCDGEADCQDRSDEADCD), and 1335–1371 (ICLPNQFRCASGQCVLIKQQCDSFPDCIDGSDELMCE). Residues 1385-1407 (SAIGPVIGIILSLFVMGGVYFVC) form a helical membrane-spanning segment. The Cytoplasmic segment spans residues 1408–1615 (QRVVCQRYAG…PPPSPCTDSS (208 aa)). The interval 1475–1501 (RNHVTGASSSSSSSTKATLYPPILNPP) is disordered. Residues 1500–1506 (PPPSPAT) carry the PPPSP motif A motif. The PPPSP motif B signature appears at 1538–1545 (PPTTPCST). Residues 1568-1615 (SDSDPYPPPPTPHSQYLSAEDSCPPSPATERSYFHLFPPPPSPCTDSS) form a disordered region. Positions 1574-1581 (PPPPTPHS) match the PPPSP motif C motif. The short motif at 1591–1596 (PPSPAT) is the PPPSP motif D element. The span at 1604 to 1615 (FPPPPSPCTDSS) shows a compositional bias: pro residues. The PPPSP motif E motif lies at 1605 to 1612 (PPPPSPCT).

The protein belongs to the LDLR family. As to quaternary structure, homodimer; disulfide-linked. Forms phosphorylated oligomer aggregates on Wnt-signaling. Component of a Wnt-signaling complex that contains a WNT protein, a FZD protein and LRP5 or LRP6. Interacts with FZD8; the interaction is formed on WNT-binding and signaling. Interacts (via the phosphorylated PPPSP motif domains) with AXIN1; the interaction prevents inhibition of beta-catenin phosphorylation and signaling and is enhanced in the presence of GSK3B and WNT1 or WNT3A. Interacts (via beta-propeller regions 3 and 4) with DKK1; the interaction, enhanced by MESD and/or KREMEN, inhibits beta-catenin signaling by preventing GSK3-mediated phosphorylation of the PPPSP motifs and subsequent, AXIN1 binding. Interacts with MESD; the interaction prevents the formation of LRP5 aggregates, targets LRP5 to the plasma membrane and, when complexed with KREMEN2, increases DKK1 binding. Interacts with CSNK1E. Interacts with SOST; the interaction antagonizes canonical Wnt signaling. Interacts with APCDD1. Interacts with CAPRIN2. Post-translationally, phosphorylation of cytoplasmic PPPSP motifs regulates the signal transduction of the Wnt signaling pathway through acting as a docking site for AXIN1. Widely expressed, with the highest level of expression in the liver and in aorta.

It is found in the membrane. Its subcellular location is the endoplasmic reticulum. Its function is as follows. Acts as a coreceptor with members of the frizzled family of seven-transmembrane spanning receptors to transduce signal by Wnt proteins. Activates the canonical Wnt signaling pathway that controls cell fate determination and self-renewal during embryonic development and adult tissue regeneration. In particular, may play an important role in the development of the posterior patterning of the epiblast during gastrulation. During bone development, regulates osteoblast proliferation and differentiation thus determining bone mass. Mechanistically, the formation of the signaling complex between Wnt ligand, frizzled receptor and LRP5 coreceptor promotes the recruitment of AXIN1 to LRP5, stabilizing beta-catenin/CTNNB1 and activating TCF/LEF-mediated transcriptional programs. Acts as a coreceptor for non-Wnt proteins, such as norrin/NDP. Binding of norrin/NDP to frizzled 4/FZD4-LRP5 receptor complex triggers beta-catenin/CTNNB1-dependent signaling known to be required for retinal vascular development. Plays a role in controlling postnatal vascular regression in retina via macrophage-induced endothelial cell apoptosis. In Homo sapiens (Human), this protein is Low-density lipoprotein receptor-related protein 5.